Reading from the N-terminus, the 61-residue chain is Small ribosomal subunit protein uS14 (61 aa).

Zn(2+) is bound by residues Cys24, Cys27, Cys40, and Cys43.

This sequence belongs to the universal ribosomal protein uS14 family. Zinc-binding uS14 subfamily. As to quaternary structure, part of the 30S ribosomal subunit. Contacts proteins S3 and S10. Zn(2+) is required as a cofactor.

Its function is as follows. Binds 16S rRNA, required for the assembly of 30S particles and may also be responsible for determining the conformation of the 16S rRNA at the A site. This Acetivibrio thermocellus (strain ATCC 27405 / DSM 1237 / JCM 9322 / NBRC 103400 / NCIMB 10682 / NRRL B-4536 / VPI 7372) (Clostridium thermocellum) protein is Small ribosomal subunit protein uS14.